The chain runs to 85 residues: Small ribosomal subunit protein bS16 (85 aa).

This sequence belongs to the bacterial ribosomal protein bS16 family.

The sequence is that of Small ribosomal subunit protein bS16 from Buchnera aphidicola subsp. Schizaphis graminum (strain Sg).